We begin with the raw amino-acid sequence, 474 residues long: Aspartyl/glutamyl-tRNA(Asn/Gln) amidotransferase subunit B (474 aa).

Belongs to the GatB/GatE family. GatB subfamily. Heterotrimer of A, B and C subunits.

It carries out the reaction L-glutamyl-tRNA(Gln) + L-glutamine + ATP + H2O = L-glutaminyl-tRNA(Gln) + L-glutamate + ADP + phosphate + H(+). The enzyme catalyses L-aspartyl-tRNA(Asn) + L-glutamine + ATP + H2O = L-asparaginyl-tRNA(Asn) + L-glutamate + ADP + phosphate + 2 H(+). In terms of biological role, allows the formation of correctly charged Asn-tRNA(Asn) or Gln-tRNA(Gln) through the transamidation of misacylated Asp-tRNA(Asn) or Glu-tRNA(Gln) in organisms which lack either or both of asparaginyl-tRNA or glutaminyl-tRNA synthetases. The reaction takes place in the presence of glutamine and ATP through an activated phospho-Asp-tRNA(Asn) or phospho-Glu-tRNA(Gln). The polypeptide is Aspartyl/glutamyl-tRNA(Asn/Gln) amidotransferase subunit B (Helicobacter hepaticus (strain ATCC 51449 / 3B1)).